The following is a 67-amino-acid chain: Arasin 2 (67 aa).

The first 25 residues, 1-25 (MERRTLLVVLLVCSCVVAAAAEASP), serve as a signal peptide directing secretion. The disordered stretch occupies residues 22 to 44 (EASPSRWPSPGRPRPFPGRPNPI). Positions 31 to 44 (PGRPRPFPGRPNPI) are enriched in pro residues. Cystine bridges form between cysteine 50-cysteine 59 and cysteine 52-cysteine 57.

Interacts with chitin through the N-terminal region (26-48). This interaction may be important, since chitin is a component of the fungal cell wall, as well as of the crab exoskeleton (permitting a possible action of arasin in wound healing in case of lesions). Post-translationally, disulfide bonds are important for activity especially against Gram-negative bacteria, since the linearization of the peptide causes a strong decrease of activity on these bacteria. In terms of tissue distribution, mainly expressed in hemocytes. No or very low expression in heart, gills, inestines, and epidermis.

Antimicrobial peptide that has a large activity spectrum with activity against Gram-positive, Gram-negative bacteria, as well as against fungi. Shows activity at micromolar concentrations. Displays minimal inhibitory concentration (MIC) values lower than minimal bactericidal concentrations (MBC). May have a dual mode of action depending on the peptide concentrations. At MIC concentrations, the peptide penetrates into the cytoplasm of target cells (tested on the Gram-negative E.coli). The two inner membrane proteins YgdD and SbmA may be required for this uptake. At concentrations higher than MIC, arasin may act by disrupting membranes. Does not show hemolytic activity. This is Arasin 2 from Hyas araneus (Atlantic lyre crab).